A 394-amino-acid chain; its full sequence is Elongation factor Tu (394 aa).

Residues 10–204 (KPHVNIGTIG…AVDSYIPQPI (195 aa)) form the tr-type G domain. A G1 region spans residues 19–26 (GHVDHGKT). 19-26 (GHVDHGKT) lines the GTP pocket. Threonine 26 lines the Mg(2+) pocket. The interval 60 to 64 (GITIS) is G2. The G3 stretch occupies residues 81 to 84 (DCPG). Residues 81 to 85 (DCPGH) and 136 to 139 (NKVD) each bind GTP. The G4 stretch occupies residues 136 to 139 (NKVD). A G5 region spans residues 174 to 176 (SAL).

The protein belongs to the TRAFAC class translation factor GTPase superfamily. Classic translation factor GTPase family. EF-Tu/EF-1A subfamily. In terms of assembly, monomer.

The protein resides in the cytoplasm. It catalyses the reaction GTP + H2O = GDP + phosphate + H(+). Its function is as follows. GTP hydrolase that promotes the GTP-dependent binding of aminoacyl-tRNA to the A-site of ribosomes during protein biosynthesis. This is Elongation factor Tu from Rickettsia prowazekii (strain Madrid E).